Reading from the N-terminus, the 629-residue chain is DNA-directed RNA polymerase subunit beta' (629 aa).

Zn(2+) is bound by residues Cys-70, Cys-72, Cys-85, and Cys-88. Mg(2+) is bound by residues Asp-472, Asp-474, and Asp-476.

Belongs to the RNA polymerase beta' chain family. RpoC1 subfamily. In terms of assembly, in plastids the minimal PEP RNA polymerase catalytic core is composed of four subunits: alpha, beta, beta', and beta''. When a (nuclear-encoded) sigma factor is associated with the core the holoenzyme is formed, which can initiate transcription. The cofactor is Mg(2+). Requires Zn(2+) as cofactor.

It localises to the plastid. The protein resides in the chloroplast. The enzyme catalyses RNA(n) + a ribonucleoside 5'-triphosphate = RNA(n+1) + diphosphate. DNA-dependent RNA polymerase catalyzes the transcription of DNA into RNA using the four ribonucleoside triphosphates as substrates. This Pyropia yezoensis (Susabi-nori) protein is DNA-directed RNA polymerase subunit beta'.